Reading from the N-terminus, the 365-residue chain is 4-hydroxy-3-methylbut-2-en-1-yl diphosphate synthase (flavodoxin) (365 aa).

[4Fe-4S] cluster contacts are provided by Cys265, Cys268, Cys300, and Glu307.

The protein belongs to the IspG family. [4Fe-4S] cluster serves as cofactor.

The enzyme catalyses (2E)-4-hydroxy-3-methylbut-2-enyl diphosphate + oxidized [flavodoxin] + H2O + 2 H(+) = 2-C-methyl-D-erythritol 2,4-cyclic diphosphate + reduced [flavodoxin]. Its pathway is isoprenoid biosynthesis; isopentenyl diphosphate biosynthesis via DXP pathway; isopentenyl diphosphate from 1-deoxy-D-xylulose 5-phosphate: step 5/6. Converts 2C-methyl-D-erythritol 2,4-cyclodiphosphate (ME-2,4cPP) into 1-hydroxy-2-methyl-2-(E)-butenyl 4-diphosphate. In Bacillus mycoides (strain KBAB4) (Bacillus weihenstephanensis), this protein is 4-hydroxy-3-methylbut-2-en-1-yl diphosphate synthase (flavodoxin).